A 918-amino-acid chain; its full sequence is Band 3 anion exchange protein (918 aa).

Positions 1-48 (MENDLSFGEDVMSYEEESDSAFPSPIRPTPPGHSGNYDLEQSRQEEDS) are disordered. At 1–392 (MENDLSFGED…ISDFTDALDP (392 aa)) the chain is on the cytoplasmic side. Residues 393–416 (QVLAAVIFIYFAALSPAITFGGLL) form a helical membrane-spanning segment. Over 417-424 (ADKTEHMM) the chain is Extracellular. A helical membrane pass occupies residues 425–445 (GVSELMISTCVQGIIFAFIAA). Over 446–448 (QPT) the chain is Cytoplasmic. Residues 449 to 465 (LVIGFSGPLLVFEEAFF) form a discontinuously helical membrane-spanning segment. Residues 466–474 (AFCKSQEIE) are Extracellular-facing. The helical transmembrane segment at 475 to 495 (YIVGRIWVGLWLVIIVVVIVA) threads the bilayer. The Cytoplasmic segment spans residues 496–507 (VEGSFLVKFISR). A helical transmembrane segment spans residues 508–530 (FTQEIFSILISLIFIYETFSKLG). The Extracellular portion of the chain corresponds to 531–583 (KIFKAHPLVLNYEHLNDSLDNPFHPVVKEHIEYHEDGNKTVHEVIHERAYPNT). 2 N-linked (GlcNAc...) asparagine glycosylation sites follow: Asn-546 and Asn-568. Residues 584–604 (ALLSMCLMFGCFFIAYFLRQF) traverse the membrane as a helical segment. Residues 605 to 615 (KNGHFLPGPIR) lie on the Cytoplasmic side of the membrane. The helical transmembrane segment at 616–636 (RMIGDFGVPIAIFFMIAVDIT) threads the bilayer. The Extracellular portion of the chain corresponds to 637–676 (IEDAYTQKLVVPKGLMVSNPNARGWFINPLGEKKPFPAWM). A helical membrane pass occupies residues 677–697 (MGACCVPALLVFILIFLESQI). Over 698-713 (TTLIVSKPERKMVKGS) the chain is Cytoplasmic. The helical transmembrane segment at 714-732 (GFHLDLLILVTMGGIASLF) threads the bilayer. The discontinuously helical transmembrane segment at 733-750 (GVPWLSAATVRSVTHANA) threads the bilayer. The Cytoplasmic portion of the chain corresponds to 751-769 (LTVMSKGPKPEIEKVLEQR). 2 helical membrane passes run 770–790 (ISGM…PILK) and 791–809 (MIPM…ITSL). Topologically, residues 810–847 (SGIQMWDRMLLLIVPRKYYPADAYAQRVTTMKMHLFTL) are cytoplasmic. The discontinuously helical intramembrane region spans 848-878 (IQMVCLGALWMVKMSAFSLALPFVLILTIPL). The S-palmitoyl cysteine moiety is linked to residue Cys-852. Over 879–918 (RMAITGTLFTDKEMKCLDASDGKVKFEEEPGEDMYESPLP) the chain is Cytoplasmic.

The protein belongs to the anion exchanger (TC 2.A.31) family. A dimer in solution, it spans the membrane asymmetrically and appears to be tetrameric.

It is found in the cell membrane. The enzyme catalyses hydrogencarbonate(in) + chloride(out) = hydrogencarbonate(out) + chloride(in). Its function is as follows. Functions both as a transporter that mediates electroneutral anion exchange across the cell membrane and as a structural protein. Major integral membrane glycoprotein of the erythrocyte membrane; required for normal flexibility and stability of the erythrocyte membrane and for normal erythrocyte shape via the interactions of its cytoplasmic domain with cytoskeletal proteins, glycolytic enzymes, and hemoglobin. Functions as a transporter that mediates the 1:1 exchange of inorganic anions across the erythrocyte membrane. Mediates chloride-bicarbonate exchange in the kidney, and is required for normal acidification of the urine. The protein is Band 3 anion exchange protein (slc4a1) of Oncorhynchus mykiss (Rainbow trout).